A 336-amino-acid polypeptide reads, in one-letter code: Dihydroorotate dehydrogenase (quinone) (336 aa).

Residues alanine 62–lysine 66 and threonine 86 each bind FMN. Lysine 66 serves as a coordination point for substrate. A substrate-binding site is contributed by asparagine 111–phenylalanine 115. The FMN site is built by asparagine 139 and asparagine 172. Asparagine 172 is a binding site for substrate. The active-site Nucleophile is the serine 175. A substrate-binding site is contributed by asparagine 177. Residues lysine 217 and threonine 245 each coordinate FMN. Position 246–247 (asparagine 246–threonine 247) interacts with substrate. FMN contacts are provided by residues glycine 268, glycine 297, and tyrosine 318–serine 319.

This sequence belongs to the dihydroorotate dehydrogenase family. Type 2 subfamily. Monomer. The cofactor is FMN.

It is found in the cell membrane. The catalysed reaction is (S)-dihydroorotate + a quinone = orotate + a quinol. It functions in the pathway pyrimidine metabolism; UMP biosynthesis via de novo pathway; orotate from (S)-dihydroorotate (quinone route): step 1/1. Catalyzes the conversion of dihydroorotate to orotate with quinone as electron acceptor. In Salmonella gallinarum (strain 287/91 / NCTC 13346), this protein is Dihydroorotate dehydrogenase (quinone).